A 110-amino-acid polypeptide reads, in one-letter code: Putative zinc finger protein ORF110 (110 aa).

Residues Tyr3–His26 form a C2H2-type zinc finger.

The sequence is that of Putative zinc finger protein ORF110 from Acidianus filamentous virus 1 (isolate United States/Yellowstone) (AFV-1).